A 910-amino-acid polypeptide reads, in one-letter code: Protein translocase subunit SecA (910 aa).

Residues Gln87, 105 to 109 (GEGKT), and Asp508 contribute to the ATP site. The tract at residues 848–910 (RLSQSQFQHQ…KYKHCHGQLS (63 aa)) is disordered. A compositionally biased stretch (low complexity) spans 869-880 (AQVQAAQQGVAQ). Residues Cys894, Cys896, Cys905, and His906 each coordinate Zn(2+). Residues 900 to 910 (KKYKHCHGQLS) are compositionally biased toward basic residues.

Belongs to the SecA family. In terms of assembly, monomer and homodimer. Part of the essential Sec protein translocation apparatus which comprises SecA, SecYEG and auxiliary proteins SecDF-YajC and YidC. Requires Zn(2+) as cofactor.

The protein resides in the cell inner membrane. It is found in the cytoplasm. The catalysed reaction is ATP + H2O + cellular proteinSide 1 = ADP + phosphate + cellular proteinSide 2.. Part of the Sec protein translocase complex. Interacts with the SecYEG preprotein conducting channel. Has a central role in coupling the hydrolysis of ATP to the transfer of proteins into and across the cell membrane, serving both as a receptor for the preprotein-SecB complex and as an ATP-driven molecular motor driving the stepwise translocation of polypeptide chains across the membrane. In Stenotrophomonas maltophilia (strain K279a), this protein is Protein translocase subunit SecA.